Reading from the N-terminus, the 422-residue chain is Probable ornithine aminotransferase, mitochondrial (422 aa).

Lys-273 carries the post-translational modification N6-(pyridoxal phosphate)lysine.

The protein belongs to the class-III pyridoxal-phosphate-dependent aminotransferase family. Pyridoxal 5'-phosphate is required as a cofactor.

It is found in the mitochondrion matrix. It catalyses the reaction a 2-oxocarboxylate + L-ornithine = L-glutamate 5-semialdehyde + an L-alpha-amino acid. The protein operates within amino-acid biosynthesis; L-proline biosynthesis; L-glutamate 5-semialdehyde from L-ornithine: step 1/1. This Caenorhabditis elegans protein is Probable ornithine aminotransferase, mitochondrial.